Consider the following 247-residue polypeptide: ATP synthase subunit a, chloroplastic (247 aa).

5 consecutive transmembrane segments (helical) span residues 38–58 (QVLITSWVVIAILLGSAFIAV), 95–115 (VPFIGTLFLFIFVSNWSGALL), 134–154 (INTTVALALLTSIAYFYAGLS), 199–219 (LVVVVLVSLVPLVVPIPVMFL), and 220–240 (GLFTSGIQALIFATLAAAYIG).

It belongs to the ATPase A chain family. In terms of assembly, F-type ATPases have 2 components, CF(1) - the catalytic core - and CF(0) - the membrane proton channel. CF(1) has five subunits: alpha(3), beta(3), gamma(1), delta(1), epsilon(1). CF(0) has four main subunits: a, b, b' and c.

The protein localises to the plastid. It is found in the chloroplast thylakoid membrane. Key component of the proton channel; it plays a direct role in the translocation of protons across the membrane. This Citrus sinensis (Sweet orange) protein is ATP synthase subunit a, chloroplastic.